The chain runs to 61 residues: Keratin-associated protein 8-1 (61 aa).

Residues 13 to 49 are 11 X 2 AA repeats of G-[YCGS]; that stretch reads GCYWGSYGYPLGYSVGCGYGSTYSPVGYGLGYGYNGC.

It belongs to the KRTAP type 8 family. As to quaternary structure, interacts with hair keratins. Expression restricted exclusively to the cortical cells of hair follicles.

In terms of biological role, in the hair cortex, hair keratin intermediate filaments are embedded in an interfilamentous matrix, consisting of hair keratin-associated proteins (KRTAP), which are essential for the formation of a rigid and resistant hair shaft through their extensive disulfide bond cross-linking with abundant cysteine residues of hair keratins. The matrix proteins include the high-sulfur and high-glycine-tyrosine keratins. The protein is Keratin-associated protein 8-1 (Krtap8-1) of Mus musculus (Mouse).